A 317-amino-acid chain; its full sequence is Acetylglutamate kinase (317 aa).

Substrate is bound by residues 75–76, R97, and N196; that span reads GG.

Belongs to the acetylglutamate kinase family. ArgB subfamily.

The protein resides in the cytoplasm. The enzyme catalyses N-acetyl-L-glutamate + ATP = N-acetyl-L-glutamyl 5-phosphate + ADP. It participates in amino-acid biosynthesis; L-arginine biosynthesis; N(2)-acetyl-L-ornithine from L-glutamate: step 2/4. Catalyzes the ATP-dependent phosphorylation of N-acetyl-L-glutamate. The protein is Acetylglutamate kinase of Corynebacterium jeikeium (strain K411).